The chain runs to 464 residues: Potassium/proton antiporter CemA (464 aa).

5 helical membrane passes run F36–L56, A241–I261, L341–F361, I389–V409, and T425–F445.

Belongs to the CemA family.

It localises to the plastid. It is found in the chloroplast inner membrane. It catalyses the reaction K(+)(in) + H(+)(out) = K(+)(out) + H(+)(in). Functionally, contributes to K(+)/H(+) antiport activity by supporting proton efflux to control proton extrusion and homeostasis in chloroplasts in a light-dependent manner to modulate photosynthesis. Prevents excessive induction of non-photochemical quenching (NPQ) under continuous-light conditions. Indirectly promotes efficient inorganic carbon uptake into chloroplasts. This is Potassium/proton antiporter CemA from Adiantum capillus-veneris (Maidenhair fern).